Reading from the N-terminus, the 210-residue chain is Thiamine-phosphate synthase (210 aa).

4-amino-2-methyl-5-(diphosphooxymethyl)pyrimidine-binding positions include 34–38 (QLRHK) and N66. Residues D67 and D86 each contribute to the Mg(2+) site. S105 contributes to the 4-amino-2-methyl-5-(diphosphooxymethyl)pyrimidine binding site. 2-[(2R,5Z)-2-carboxy-4-methylthiazol-5(2H)-ylidene]ethyl phosphate is bound at residue 131–133 (TSS). K134 serves as a coordination point for 4-amino-2-methyl-5-(diphosphooxymethyl)pyrimidine. G162 is a 2-[(2R,5Z)-2-carboxy-4-methylthiazol-5(2H)-ylidene]ethyl phosphate binding site.

This sequence belongs to the thiamine-phosphate synthase family. Requires Mg(2+) as cofactor.

The catalysed reaction is 2-[(2R,5Z)-2-carboxy-4-methylthiazol-5(2H)-ylidene]ethyl phosphate + 4-amino-2-methyl-5-(diphosphooxymethyl)pyrimidine + 2 H(+) = thiamine phosphate + CO2 + diphosphate. The enzyme catalyses 2-(2-carboxy-4-methylthiazol-5-yl)ethyl phosphate + 4-amino-2-methyl-5-(diphosphooxymethyl)pyrimidine + 2 H(+) = thiamine phosphate + CO2 + diphosphate. It catalyses the reaction 4-methyl-5-(2-phosphooxyethyl)-thiazole + 4-amino-2-methyl-5-(diphosphooxymethyl)pyrimidine + H(+) = thiamine phosphate + diphosphate. It participates in cofactor biosynthesis; thiamine diphosphate biosynthesis; thiamine phosphate from 4-amino-2-methyl-5-diphosphomethylpyrimidine and 4-methyl-5-(2-phosphoethyl)-thiazole: step 1/1. Condenses 4-methyl-5-(beta-hydroxyethyl)thiazole monophosphate (THZ-P) and 2-methyl-4-amino-5-hydroxymethyl pyrimidine pyrophosphate (HMP-PP) to form thiamine monophosphate (TMP). The polypeptide is Thiamine-phosphate synthase (Chlorobium limicola (strain DSM 245 / NBRC 103803 / 6330)).